Reading from the N-terminus, the 438-residue chain is UDP-N-acetylmuramoylalanine--D-glutamate ligase (438 aa).

Position 112 to 118 (112 to 118) interacts with ATP; sequence GSNGKST.

It belongs to the MurCDEF family.

It is found in the cytoplasm. It carries out the reaction UDP-N-acetyl-alpha-D-muramoyl-L-alanine + D-glutamate + ATP = UDP-N-acetyl-alpha-D-muramoyl-L-alanyl-D-glutamate + ADP + phosphate + H(+). It participates in cell wall biogenesis; peptidoglycan biosynthesis. Cell wall formation. Catalyzes the addition of glutamate to the nucleotide precursor UDP-N-acetylmuramoyl-L-alanine (UMA). This chain is UDP-N-acetylmuramoylalanine--D-glutamate ligase, found in Salmonella choleraesuis (strain SC-B67).